A 506-amino-acid polypeptide reads, in one-letter code: Aldehyde dehydrogenase (506 aa).

Residue 218 to 224 (GFGLEAG) coordinates NAD(+). Active-site residues include Glu262 and Cys301.

The protein belongs to the aldehyde dehydrogenase family.

It carries out the reaction an aldehyde + NAD(+) + H2O = a carboxylate + NADH + 2 H(+). The polypeptide is Aldehyde dehydrogenase (Rhodospirillum rubrum (strain ATCC 11170 / ATH 1.1.1 / DSM 467 / LMG 4362 / NCIMB 8255 / S1)).